Consider the following 157-residue polypeptide: MNYEIRQVDKRTVAGFHLVGPWEQTVKQGFEQLMKWVEGRQIVTDEWIAVYFDNPDVVPAEKLRCSTVVSVPADFVVPANSEGVSLSEIDGGQYATAVARVTDNDFSTPWYQFFNSLAQDNKYEMACKPCFEVYLNDGCTEGYWDIEMYIAVQPLSR.

Belongs to the DNA gyrase inhibitor family. In terms of assembly, interacts with DNA gyrase.

The protein localises to the cytoplasm. Inhibits the supercoiling activity of DNA gyrase. Acts by inhibiting DNA gyrase at an early step, prior to (or at the step of) binding of DNA by the gyrase. It protects cells against toxins that target DNA gyrase, by inhibiting activity of these toxins and reducing the formation of lethal double-strand breaks in the cell. This chain is DNA gyrase inhibitor, found in Citrobacter rodentium (strain ICC168) (Citrobacter freundii biotype 4280).